A 241-amino-acid chain; its full sequence is MCATPVSPTPLPATAPLALRWRGTEPYEASFEAMRAFTDGRTAETPDEIWLVEHPPVFTLGQAGDPAHLLAADSGIPLVKVDRGGQITYHGPGQVVAYLLLDLRRRKLMVRELVTRIEQAVIDTLAAYNLAGERKAGAPGIYVAPGPAAGSHAGAKIAALGLKIRNGCSYHGVSLNVNMDLRPFLAINPCGYAGLETVDMATLGVTAGWNDVARTFAACLTANLDGSPAAVAQPQAGALTA.

One can recognise a BPL/LPL catalytic domain in the interval 43–228; the sequence is AETPDEIWLV…CLTANLDGSP (186 aa). Substrate contacts are provided by residues 83-90, 159-161, and 172-174; these read RGGQITYH, ALG, and GVS. Cysteine 190 (acyl-thioester intermediate) is an active-site residue.

This sequence belongs to the LipB family.

It is found in the cytoplasm. It catalyses the reaction octanoyl-[ACP] + L-lysyl-[protein] = N(6)-octanoyl-L-lysyl-[protein] + holo-[ACP] + H(+). Its pathway is protein modification; protein lipoylation via endogenous pathway; protein N(6)-(lipoyl)lysine from octanoyl-[acyl-carrier-protein]: step 1/2. In terms of biological role, catalyzes the transfer of endogenously produced octanoic acid from octanoyl-acyl-carrier-protein onto the lipoyl domains of lipoate-dependent enzymes. Lipoyl-ACP can also act as a substrate although octanoyl-ACP is likely to be the physiological substrate. This Paraburkholderia xenovorans (strain LB400) protein is Octanoyltransferase.